The chain runs to 479 residues: Bifunctional protein HldE (479 aa).

Residues Met-1–Lys-319 form a ribokinase region. Asn-195–Glu-198 contacts ATP. The active site involves Asp-264. The tract at residues Met-346–Asn-479 is cytidylyltransferase.

It in the N-terminal section; belongs to the carbohydrate kinase PfkB family. The protein in the C-terminal section; belongs to the cytidylyltransferase family. As to quaternary structure, homodimer.

It catalyses the reaction D-glycero-beta-D-manno-heptose 7-phosphate + ATP = D-glycero-beta-D-manno-heptose 1,7-bisphosphate + ADP + H(+). The enzyme catalyses D-glycero-beta-D-manno-heptose 1-phosphate + ATP + H(+) = ADP-D-glycero-beta-D-manno-heptose + diphosphate. It functions in the pathway nucleotide-sugar biosynthesis; ADP-L-glycero-beta-D-manno-heptose biosynthesis; ADP-L-glycero-beta-D-manno-heptose from D-glycero-beta-D-manno-heptose 7-phosphate: step 1/4. The protein operates within nucleotide-sugar biosynthesis; ADP-L-glycero-beta-D-manno-heptose biosynthesis; ADP-L-glycero-beta-D-manno-heptose from D-glycero-beta-D-manno-heptose 7-phosphate: step 3/4. In terms of biological role, catalyzes the phosphorylation of D-glycero-D-manno-heptose 7-phosphate at the C-1 position to selectively form D-glycero-beta-D-manno-heptose-1,7-bisphosphate. Its function is as follows. Catalyzes the ADP transfer from ATP to D-glycero-beta-D-manno-heptose 1-phosphate, yielding ADP-D-glycero-beta-D-manno-heptose. This Blochmanniella floridana protein is Bifunctional protein HldE.